The chain runs to 117 residues: Hainantoxin-XV-3 (117 aa).

The N-terminal stretch at 1-20 (MKLCAVIIASLLVCVAVASS) is a signal peptide. The segment at 20 to 55 (SSDNQKEFAQEKEMTREETQSLGEHEKDDEVTGSEE) is disordered. A propeptide spanning residues 21-56 (SDNQKEFAQEKEMTREETQSLGEHEKDDEVTGSEER) is cleaved from the precursor. Residues 23 to 55 (NQKEFAQEKEMTREETQSLGEHEKDDEVTGSEE) show a composition bias toward basic and acidic residues. Intrachain disulfides connect C58/C72, C65/C78, C69/C115, and C71/C91.

This sequence belongs to the neurotoxin 03 (Tx2) family. 02 subfamily. HNTX-XV sub-subfamily. In terms of tissue distribution, expressed by the venom gland.

The protein resides in the secreted. In terms of biological role, putative ion channel inhibitor. The protein is Hainantoxin-XV-3 of Cyriopagopus hainanus (Chinese bird spider).